We begin with the raw amino-acid sequence, 42 residues long: uncharacterized protein (42 aa).

A helical transmembrane segment spans residues 15-35 (INVCLSFFFLFYFIFVLFFAA).

The protein resides in the membrane. This is an uncharacterized protein from Dictyostelium discoideum (Social amoeba).